A 27-amino-acid polypeptide reads, in one-letter code: RGSXLTTLPLRNIMDMLHMGXITIGTP.

It belongs to the peptidase A1 family. In terms of processing, glycosylated. As to expression, placenta.

The sequence is that of Pregnancy-associated glycoprotein 59 (PAG59) from Capra hircus (Goat).